A 754-amino-acid chain; its full sequence is 1,4-alpha-glucan branching enzyme GlgB (754 aa).

Asp431 (nucleophile) is an active-site residue. Glu484 serves as the catalytic Proton donor.

The protein belongs to the glycosyl hydrolase 13 family. GlgB subfamily. In terms of assembly, monomer.

The catalysed reaction is Transfers a segment of a (1-&gt;4)-alpha-D-glucan chain to a primary hydroxy group in a similar glucan chain.. It participates in glycan biosynthesis; glycogen biosynthesis. Catalyzes the formation of the alpha-1,6-glucosidic linkages in glycogen by scission of a 1,4-alpha-linked oligosaccharide from growing alpha-1,4-glucan chains and the subsequent attachment of the oligosaccharide to the alpha-1,6 position. This Prochlorococcus marinus (strain MIT 9215) protein is 1,4-alpha-glucan branching enzyme GlgB.